We begin with the raw amino-acid sequence, 504 residues long: Pre-mRNA-processing factor 19 (504 aa).

Ser2 carries the post-translational modification N-acetylserine. One can recognise a U-box domain in the interval 2 to 73; it reads SLICSISNEV…KPPSATSIPA (72 aa). The may mediate interaction with PSMC5 stretch occupies residues 68-223; sequence ATSIPAILKA…VGLHSASIPG (156 aa). An N6-acetyllysine mark is found at Lys122, Lys179, Lys244, and Lys261. A WD 1 repeat occupies 219 to 259; that stretch reads ASIPGILALDLCPSDTNKILTGGADKNVVVFDKSSEQILAT. WD repeat units lie at residues 262-301, 304-345, 348-387, 390-429, 433-472, and 473-503; these read GHTK…CVQV, AHES…TKVT, TSGC…NVAN, GHSG…NFKT, DNNF…LHFT, and EHSG…KFYS.

It belongs to the WD repeat PRP19 family. In terms of assembly, homotetramer. Component of activated, catalytic and post-catalytic spliceosomes. Component of the Prp19 complex/PRP19C/Nineteen complex/NTC and related complexes described as PRP19-CDC5L splicing complex and PSO4 complex. A homotetramer of PRPF19, CDC5L, PLRG1 and BCAS2 constitute the core of those complexes. The interaction with CDC5L, PLRG1 and BCAS2 is direct within this core complex. At least three less stably associated proteins CTNNBL1, CWC15 and HSPA8 are found in the Prp19 complex. The Prp19 complex associates with the spliceosome during its assembly and remodeling recruiting additional proteins. Component of the XAB2 complex, a multimeric protein complex composed of XAB2, PRPF19, AQR, ZNF830, ISY1, and PPIE. Interacts with CWC22 and EIF4A3 in an RNA-independent manner. Interacts with RPA1 and RPA2; the PRP19-CDC5L complex is recruited to the sites of DNA repair where it interacts with the replication protein A complex (RPA). Interacts with SETMAR; required for SETMAR recruitment to site of DNA damage. Interacts with U2AF2; the interaction is direct and recruits the Prp19 complex to RNA polymerase II C-terminal domain (CTD) and the pre-mRNA. Interacts with PRPF3. Interacts with APEX1, DNTT and PSMB4. Interacts with PSMC5. Interacts with KNSTRN. Interacts (via N-terminus) with CDC5L. Interacts with KHDC4. Interacts with USB1. Interacts with DDX41. As to expression, ubiquitous. Weakly expressed in senescent cells of different tissue origins. Highly expressed in tumor cell lines.

The protein resides in the nucleus. It is found in the nucleoplasm. It localises to the cytoplasm. Its subcellular location is the cytoskeleton. The protein localises to the spindle. The protein resides in the lipid droplet. It catalyses the reaction S-ubiquitinyl-[E2 ubiquitin-conjugating enzyme]-L-cysteine + [acceptor protein]-L-lysine = [E2 ubiquitin-conjugating enzyme]-L-cysteine + N(6)-ubiquitinyl-[acceptor protein]-L-lysine.. It participates in protein modification; protein ubiquitination. Ubiquitin-protein ligase which is a core component of several complexes mainly involved pre-mRNA splicing and DNA repair. Required for pre-mRNA splicing as component of the spliceosome. Core component of the PRP19C/Prp19 complex/NTC/Nineteen complex which is part of the spliceosome and participates in its assembly, its remodeling and is required for its activity. During assembly of the spliceosome, mediates 'Lys-63'-linked polyubiquitination of the U4 spliceosomal protein PRPF3. Ubiquitination of PRPF3 allows its recognition by the U5 component PRPF8 and stabilizes the U4/U5/U6 tri-snRNP spliceosomal complex. Recruited to RNA polymerase II C-terminal domain (CTD) and the pre-mRNA, it may also couple the transcriptional and spliceosomal machineries. The XAB2 complex, which contains PRPF19, is also involved in pre-mRNA splicing, transcription and transcription-coupled repair. Beside its role in pre-mRNA splicing PRPF19, as part of the PRP19-CDC5L complex, plays a role in the DNA damage response/DDR. It is recruited to the sites of DNA damage by the RPA complex where PRPF19 directly ubiquitinates RPA1 and RPA2. 'Lys-63'-linked polyubiquitination of the RPA complex allows the recruitment of the ATR-ATRIP complex and the activation of ATR, a master regulator of the DNA damage response. May also play a role in DNA double-strand break (DSB) repair by recruiting the repair factor SETMAR to altered DNA. As part of the PSO4 complex may also be involved in the DNA interstrand cross-links/ICLs repair process. In addition, may also mediate 'Lys-48'-linked polyubiquitination of substrates and play a role in proteasomal degradation. May play a role in the biogenesis of lipid droplets. May play a role in neural differentiation possibly through its function as part of the spliceosome. The protein is Pre-mRNA-processing factor 19 of Homo sapiens (Human).